The chain runs to 491 residues: Spermatogenesis-defective protein 39 homolog (491 aa).

Thr-21 is subject to Phosphothreonine. The span at 72-81 (KETAGSSGST) shows a compositional bias: polar residues. A disordered region spans residues 72–101 (KETAGSSGSTPEGREQLKGRNSFYTQLPKP). A Phosphothreonine modification is found at Thr-115. Ser-119, Ser-122, and Ser-128 each carry phosphoserine. The segment at 121–141 (QSLSDALSDTPAKSYAPELGR) is disordered. Thr-130 is subject to Phosphothreonine.

It belongs to the SPE39 family. As to quaternary structure, interacts with VPS33B. Associates with the homotypic fusion and vacuole protein sorting (HOPS) complex; impaired by VPS33B. Interacts with RAB11A.

The protein localises to the cytoplasm. It localises to the cytoplasmic vesicle. It is found in the early endosome. Its subcellular location is the recycling endosome. The protein resides in the late endosome. Its function is as follows. Proposed to be involved in endosomal maturation implicating in part VPS33B. In epithelial cells, the VPS33B:VIPAS39 complex may play a role in the apical RAB11A-dependent recycling pathway and in the maintenance of the apical-basolateral polarity. May play a role in lysosomal trafficking, probably via association with the core HOPS complex in a discrete population of endosomes; the functions seems to be independent of VPS33B. May play a role in vesicular trafficking during spermatogenesis. May be involved in direct or indirect transcriptional regulation of E-cadherin. In Mus musculus (Mouse), this protein is Spermatogenesis-defective protein 39 homolog (Vipas39).